The chain runs to 570 residues: Urease subunit alpha (570 aa).

The region spanning Gly132 to Phe570 is the Urease domain. Ni(2+) is bound by residues His137 and His139. His139 and Ala170 together coordinate substrate. Lys220 contributes to the Ni(2+) binding site. Lys220 is subject to N6-carboxylysine. Residues His222 and His249 each coordinate substrate. 2 residues coordinate Ni(2+): His249 and His275. His323 serves as the catalytic Proton donor. Residue Asp363 coordinates Ni(2+). Ala366 contributes to the substrate binding site.

Belongs to the metallo-dependent hydrolases superfamily. Urease alpha subunit family. Heterotrimer of UreA (gamma), UreB (beta) and UreC (alpha) subunits. Three heterotrimers associate to form the active enzyme. Requires Ni cation as cofactor. Post-translationally, carboxylation allows a single lysine to coordinate two nickel ions.

Its subcellular location is the cytoplasm. It catalyses the reaction urea + 2 H2O + H(+) = hydrogencarbonate + 2 NH4(+). It functions in the pathway nitrogen metabolism; urea degradation; CO(2) and NH(3) from urea (urease route): step 1/1. Inhibited by fluoride. In Sporosarcina pasteurii (Bacillus pasteurii), this protein is Urease subunit alpha.